A 217-amino-acid chain; its full sequence is Putative threonylcarbamoyl-AMP synthase (217 aa).

Residues 14 to 199 (SRGIVSAVGA…TPRVLRPGPV (186 aa)) form the YrdC-like domain.

It belongs to the SUA5 family.

It is found in the cytoplasm. The catalysed reaction is L-threonine + hydrogencarbonate + ATP = L-threonylcarbamoyladenylate + diphosphate + H2O. Functionally, required for the formation of a threonylcarbamoyl group on adenosine at position 37 (t(6)A37) in tRNAs that read codons beginning with adenine. Catalyzes the conversion of L-threonine, HCO(3)(-)/CO(2) and ATP to give threonylcarbamoyl-AMP (TC-AMP) as the acyladenylate intermediate, with the release of diphosphate. In Mycobacterium tuberculosis (strain CDC 1551 / Oshkosh), this protein is Putative threonylcarbamoyl-AMP synthase.